The sequence spans 159 residues: Phosphopantetheine adenylyltransferase (159 aa).

Residue Thr-10 participates in substrate binding. Residues 10–11 (TF) and His-18 contribute to the ATP site. Substrate-binding residues include Lys-42, Leu-74, and Arg-88. Residues 89–91 (GLR), Glu-99, and 124–130 (NSFISST) contribute to the ATP site.

The protein belongs to the bacterial CoaD family. As to quaternary structure, homohexamer. Mg(2+) serves as cofactor.

Its subcellular location is the cytoplasm. It catalyses the reaction (R)-4'-phosphopantetheine + ATP + H(+) = 3'-dephospho-CoA + diphosphate. Its pathway is cofactor biosynthesis; coenzyme A biosynthesis; CoA from (R)-pantothenate: step 4/5. Its function is as follows. Reversibly transfers an adenylyl group from ATP to 4'-phosphopantetheine, yielding dephospho-CoA (dPCoA) and pyrophosphate. The sequence is that of Phosphopantetheine adenylyltransferase from Shewanella pealeana (strain ATCC 700345 / ANG-SQ1).